A 250-amino-acid polypeptide reads, in one-letter code: NAD(P)H-quinone oxidoreductase subunit K (250 aa).

Residues Cys63, Cys64, Cys128, and Cys159 each coordinate [4Fe-4S] cluster.

Belongs to the complex I 20 kDa subunit family. As to quaternary structure, NDH-1 can be composed of about 15 different subunits; different subcomplexes with different compositions have been identified which probably have different functions. It depends on [4Fe-4S] cluster as a cofactor.

Its subcellular location is the cellular thylakoid membrane. The enzyme catalyses a plastoquinone + NADH + (n+1) H(+)(in) = a plastoquinol + NAD(+) + n H(+)(out). It carries out the reaction a plastoquinone + NADPH + (n+1) H(+)(in) = a plastoquinol + NADP(+) + n H(+)(out). In terms of biological role, NDH-1 shuttles electrons from an unknown electron donor, via FMN and iron-sulfur (Fe-S) centers, to quinones in the respiratory and/or the photosynthetic chain. The immediate electron acceptor for the enzyme in this species is believed to be plastoquinone. Couples the redox reaction to proton translocation, and thus conserves the redox energy in a proton gradient. Cyanobacterial NDH-1 also plays a role in inorganic carbon-concentration. The protein is NAD(P)H-quinone oxidoreductase subunit K of Rippkaea orientalis (strain PCC 8801 / RF-1) (Cyanothece sp. (strain PCC 8801)).